The following is a 274-amino-acid chain: Large ribosomal subunit protein uL2 (274 aa).

The interval 222-274 (GVAMNPVDHPHGGGEGRGKGHHPQSPWGQLAKGYKTRRGKKASDKLIVRRRNG) is disordered. Over residues 229-239 (DHPHGGGEGRG) the composition is skewed to basic and acidic residues.

It belongs to the universal ribosomal protein uL2 family. In terms of assembly, part of the 50S ribosomal subunit. Forms a bridge to the 30S subunit in the 70S ribosome.

Functionally, one of the primary rRNA binding proteins. Required for association of the 30S and 50S subunits to form the 70S ribosome, for tRNA binding and peptide bond formation. It has been suggested to have peptidyltransferase activity; this is somewhat controversial. Makes several contacts with the 16S rRNA in the 70S ribosome. The polypeptide is Large ribosomal subunit protein uL2 (Thermosipho melanesiensis (strain DSM 12029 / CIP 104789 / BI429)).